We begin with the raw amino-acid sequence, 171 residues long: Cytochrome c oxidase subunit 4 isoform 2, mitochondrial (171 aa).

A mitochondrion-targeting transit peptide spans 1–28 (MLPRAAWSLVLRKGGGGRRGMHSSEGTT). The interval 13–32 (KGGGGRRGMHSSEGTTRGGG) is disordered. Residues 29 to 100 (RGGGKMSPYT…TFAEMNRRSN (72 aa)) are Mitochondrial matrix-facing. A helical membrane pass occupies residues 101-126 (EWKTVMGCVFFFIGFAALVIWWQRVY). The Mitochondrial intermembrane portion of the chain corresponds to 127-171 (VFPPKPITLTDERKAQQLQRMLDMKVNPVQGLASRWDYEKKQWKK).

This sequence belongs to the cytochrome c oxidase IV family. In terms of assembly, component of the cytochrome c oxidase (complex IV, CIV), a multisubunit enzyme composed of 14 subunits. The complex is composed of a catalytic core of 3 subunits MT-CO1, MT-CO2 and MT-CO3, encoded in the mitochondrial DNA, and 11 supernumerary subunits COX4I1 (or COX4I2), COX5A, COX5B, COX6A1 (or COX6A2), COX6B1 (or COX6B2), COX6C, COX7A2 (or COX7A1), COX7B, COX7C, COX8A and NDUFA4, which are encoded in the nuclear genome. The complex exists as a monomer or a dimer and forms supercomplexes (SCs) in the inner mitochondrial membrane with NADH-ubiquinone oxidoreductase (complex I, CI) and ubiquinol-cytochrome c oxidoreductase (cytochrome b-c1 complex, complex III, CIII), resulting in different assemblies (supercomplex SCI(1)III(2)IV(1) and megacomplex MCI(2)III(2)IV(2)). In terms of tissue distribution, highly expressed in lung.

The protein resides in the mitochondrion inner membrane. The protein operates within energy metabolism; oxidative phosphorylation. Its function is as follows. Component of the cytochrome c oxidase, the last enzyme in the mitochondrial electron transport chain which drives oxidative phosphorylation. The respiratory chain contains 3 multisubunit complexes succinate dehydrogenase (complex II, CII), ubiquinol-cytochrome c oxidoreductase (cytochrome b-c1 complex, complex III, CIII) and cytochrome c oxidase (complex IV, CIV), that cooperate to transfer electrons derived from NADH and succinate to molecular oxygen, creating an electrochemical gradient over the inner membrane that drives transmembrane transport and the ATP synthase. Cytochrome c oxidase is the component of the respiratory chain that catalyzes the reduction of oxygen to water. Electrons originating from reduced cytochrome c in the intermembrane space (IMS) are transferred via the dinuclear copper A center (CU(A)) of subunit 2 and heme A of subunit 1 to the active site in subunit 1, a binuclear center (BNC) formed by heme A3 and copper B (CU(B)). The BNC reduces molecular oxygen to 2 water molecules using 4 electrons from cytochrome c in the IMS and 4 protons from the mitochondrial matrix. The sequence is that of Cytochrome c oxidase subunit 4 isoform 2, mitochondrial from Homo sapiens (Human).